A 390-amino-acid polypeptide reads, in one-letter code: NADH-quinone oxidoreductase subunit D (390 aa).

It belongs to the complex I 49 kDa subunit family. In terms of assembly, NDH-1 is composed of 14 different subunits. Subunits NuoB, C, D, E, F, and G constitute the peripheral sector of the complex.

It is found in the cell inner membrane. It carries out the reaction a quinone + NADH + 5 H(+)(in) = a quinol + NAD(+) + 4 H(+)(out). NDH-1 shuttles electrons from NADH, via FMN and iron-sulfur (Fe-S) centers, to quinones in the respiratory chain. The immediate electron acceptor for the enzyme in this species is believed to be ubiquinone. Couples the redox reaction to proton translocation (for every two electrons transferred, four hydrogen ions are translocated across the cytoplasmic membrane), and thus conserves the redox energy in a proton gradient. This Trichlorobacter lovleyi (strain ATCC BAA-1151 / DSM 17278 / SZ) (Geobacter lovleyi) protein is NADH-quinone oxidoreductase subunit D.